Here is an 881-residue protein sequence, read N- to C-terminus: Valine--tRNA ligase (881 aa).

A 'HIGH' region motif is present at residues 49–59 (PNVTGKLHLGH). The short motif at 526 to 530 (KMSKS) is the 'KMSKS' region element. Position 529 (Lys-529) interacts with ATP. The stretch at 810–881 (LADLINLDEE…VRQRLADLEK (72 aa)) forms a coiled coil.

The protein belongs to the class-I aminoacyl-tRNA synthetase family. ValS type 1 subfamily. As to quaternary structure, monomer.

It localises to the cytoplasm. The enzyme catalyses tRNA(Val) + L-valine + ATP = L-valyl-tRNA(Val) + AMP + diphosphate. Catalyzes the attachment of valine to tRNA(Val). As ValRS can inadvertently accommodate and process structurally similar amino acids such as threonine, to avoid such errors, it has a 'posttransfer' editing activity that hydrolyzes mischarged Thr-tRNA(Val) in a tRNA-dependent manner. The polypeptide is Valine--tRNA ligase (Bacillus anthracis).